The following is a 545-amino-acid chain: Chaperonin GroEL (545 aa).

Residues 30–33 (TLGP), Lys51, 87–91 (DGTTT), Gly415, and Asp495 contribute to the ATP site.

It belongs to the chaperonin (HSP60) family. As to quaternary structure, forms a cylinder of 14 subunits composed of two heptameric rings stacked back-to-back. Interacts with the co-chaperonin GroES.

The protein resides in the cytoplasm. The enzyme catalyses ATP + H2O + a folded polypeptide = ADP + phosphate + an unfolded polypeptide.. Together with its co-chaperonin GroES, plays an essential role in assisting protein folding. The GroEL-GroES system forms a nano-cage that allows encapsulation of the non-native substrate proteins and provides a physical environment optimized to promote and accelerate protein folding. In Shewanella baltica (strain OS155 / ATCC BAA-1091), this protein is Chaperonin GroEL.